The sequence spans 306 residues: Ribosomal RNA small subunit methyltransferase H (306 aa).

S-adenosyl-L-methionine-binding positions include 33–35 (GGY), Asp51, Phe78, Asp96, and Gln103.

Belongs to the methyltransferase superfamily. RsmH family.

It localises to the cytoplasm. The enzyme catalyses cytidine(1402) in 16S rRNA + S-adenosyl-L-methionine = N(4)-methylcytidine(1402) in 16S rRNA + S-adenosyl-L-homocysteine + H(+). In terms of biological role, specifically methylates the N4 position of cytidine in position 1402 (C1402) of 16S rRNA. In Rickettsia typhi (strain ATCC VR-144 / Wilmington), this protein is Ribosomal RNA small subunit methyltransferase H.